The primary structure comprises 482 residues: ATP synthase subunit beta (482 aa).

Glycine 161–threonine 168 is a binding site for ATP.

It belongs to the ATPase alpha/beta chains family. F-type ATPases have 2 components, CF(1) - the catalytic core - and CF(0) - the membrane proton channel. CF(1) has five subunits: alpha(3), beta(3), gamma(1), delta(1), epsilon(1). CF(0) has three main subunits: a(1), b(2) and c(9-12). The alpha and beta chains form an alternating ring which encloses part of the gamma chain. CF(1) is attached to CF(0) by a central stalk formed by the gamma and epsilon chains, while a peripheral stalk is formed by the delta and b chains.

The protein localises to the cell inner membrane. It catalyses the reaction ATP + H2O + 4 H(+)(in) = ADP + phosphate + 5 H(+)(out). Produces ATP from ADP in the presence of a proton gradient across the membrane. The catalytic sites are hosted primarily by the beta subunits. The polypeptide is ATP synthase subunit beta (Solibacter usitatus (strain Ellin6076)).